Consider the following 243-residue polypeptide: MKSLLLMMTFFTRIPVTYPYDYDEKDFIKGVKFLPVIGLLIGILMYLPTLLAPYIHRPIIIVSIWALYFLITGGLHIDGLADTFDGIFSYRSKEEMLRIMKDSRIGAFGVLGILWLLILNLTLAYYTENMLLLLVPVVGRASAVFAASRTIYARSEGMGGAFIESCRTKEGVISIAFSLLLGSMVSIKGAIIPMGITFLGVAMLTKKISKILGGMTGDTIGATIEISQTLFMLSAYLLKSIII.

Transmembrane regions (helical) follow at residues 33-53 (FLPV…LLAP), 59-79 (IIIV…HIDG), 105-125 (IGAF…TLAY), 127-147 (TENM…VFAA), 172-192 (VISI…GAII), and 223-243 (TIEI…SIII).

Belongs to the CobS family. Mg(2+) is required as a cofactor.

The protein localises to the cell membrane. The catalysed reaction is alpha-ribazole + adenosylcob(III)inamide-GDP = adenosylcob(III)alamin + GMP + H(+). It catalyses the reaction alpha-ribazole 5'-phosphate + adenosylcob(III)inamide-GDP = adenosylcob(III)alamin 5'-phosphate + GMP + H(+). Its pathway is cofactor biosynthesis; adenosylcobalamin biosynthesis; adenosylcobalamin from cob(II)yrinate a,c-diamide: step 7/7. In terms of biological role, joins adenosylcobinamide-GDP and alpha-ribazole to generate adenosylcobalamin (Ado-cobalamin). Also synthesizes adenosylcobalamin 5'-phosphate from adenosylcobinamide-GDP and alpha-ribazole 5'-phosphate. The polypeptide is Adenosylcobinamide-GDP ribazoletransferase (Alkaliphilus oremlandii (strain OhILAs) (Clostridium oremlandii (strain OhILAs))).